The following is a 77-amino-acid chain: Putative neurotoxin 1 (77 aa).

Positions 1–25 (MKAFIAILSIAIVLLLIVSIKETSA) are cleaved as a signal peptide. Positions 26–46 (KDCKQECVKRYTKGDLTNFLK) are excised as a propeptide.

This sequence belongs to the scolopendra neurotoxin 3 family. Contains 2 disulfide bonds. Expressed by the venom gland.

Its subcellular location is the secreted. The chain is Putative neurotoxin 1 from Scolopendra mutilans (Chinese red-headed centipede).